The sequence spans 152 residues: uncharacterized protein (152 aa).

An HTH marR-type domain is found at 3 to 143 (EQKLCQAINL…IIEIFTILKS (141 aa)). A DNA-binding region (H-T-H motif) is located at residues 55 to 78 (PGSLAMYQNVHKSAISNRLKKLLE).

This is an uncharacterized protein from Bacillus subtilis (strain 168).